Consider the following 638-residue polypeptide: Fructose-1,6-bisphosphatase class 3 (638 aa).

It belongs to the FBPase class 3 family. It depends on Mn(2+) as a cofactor.

The catalysed reaction is beta-D-fructose 1,6-bisphosphate + H2O = beta-D-fructose 6-phosphate + phosphate. It participates in carbohydrate biosynthesis; gluconeogenesis. In Pediococcus pentosaceus (strain ATCC 25745 / CCUG 21536 / LMG 10740 / 183-1w), this protein is Fructose-1,6-bisphosphatase class 3.